The following is a 205-amino-acid chain: Recombination protein RecR (205 aa).

The segment at 58–75 (CSECQNVTDRDSDPCVLC) adopts a C4-type zinc-finger fold. A Toprim domain is found at 83 to 182 (TVICVVESPV…AVSKIARGIP (100 aa)).

It belongs to the RecR family.

May play a role in DNA repair. It seems to be involved in an RecBC-independent recombinational process of DNA repair. It may act with RecF and RecO. This chain is Recombination protein RecR, found in Chlorobium phaeobacteroides (strain DSM 266 / SMG 266 / 2430).